A 142-amino-acid polypeptide reads, in one-letter code: Sec-independent protein translocase protein TatB (142 aa).

A helical transmembrane segment spans residues 2 to 22; sequence FANVGWGEMLVLVIAGLVILG. The interval 89 to 142 is disordered; sequence DDSIFTGKFDQNGKSEKPEQKPEKPQSAPGPAAAVPDQPAGGRSGSTPYDTDAT. The span at 99–112 shows a compositional bias: basic and acidic residues; it reads QNGKSEKPEQKPEK. A compositionally biased stretch (polar residues) spans 133–142; sequence GSTPYDTDAT.

Belongs to the TatB family. The Tat system comprises two distinct complexes: a TatABC complex, containing multiple copies of TatA, TatB and TatC subunits, and a separate TatA complex, containing only TatA subunits. Substrates initially bind to the TatABC complex, which probably triggers association of the separate TatA complex to form the active translocon.

It localises to the cell membrane. In terms of biological role, part of the twin-arginine translocation (Tat) system that transports large folded proteins containing a characteristic twin-arginine motif in their signal peptide across membranes. Together with TatC, TatB is part of a receptor directly interacting with Tat signal peptides. TatB may form an oligomeric binding site that transiently accommodates folded Tat precursor proteins before their translocation. The sequence is that of Sec-independent protein translocase protein TatB from Mycolicibacterium vanbaalenii (strain DSM 7251 / JCM 13017 / BCRC 16820 / KCTC 9966 / NRRL B-24157 / PYR-1) (Mycobacterium vanbaalenii).